The chain runs to 251 residues: UPF0309 protein SGR_3073 (251 aa).

The region spanning 36-221 (VADTVASGGR…EQLVARGIEP (186 aa)) is the SIS domain.

This sequence belongs to the UPF0309 family.

This chain is UPF0309 protein SGR_3073, found in Streptomyces griseus subsp. griseus (strain JCM 4626 / CBS 651.72 / NBRC 13350 / KCC S-0626 / ISP 5235).